The sequence spans 343 residues: DNA-directed RNA polymerase subunit alpha (343 aa).

Residues 1 to 239 (MGETVTIQKN…DQLNVFVNFE (239 aa)) are alpha N-terminal domain (alpha-NTD). The tract at residues 255 to 343 (FNPAFLKKVD…ELAKRFEDHY (89 aa)) is alpha C-terminal domain (alpha-CTD).

The protein belongs to the RNA polymerase alpha chain family. Homodimer. The RNAP catalytic core consists of 2 alpha, 1 beta, 1 beta' and 1 omega subunit. When a sigma factor is associated with the core the holoenzyme is formed, which can initiate transcription.

The enzyme catalyses RNA(n) + a ribonucleoside 5'-triphosphate = RNA(n+1) + diphosphate. Its function is as follows. DNA-dependent RNA polymerase catalyzes the transcription of DNA into RNA using the four ribonucleoside triphosphates as substrates. This chain is DNA-directed RNA polymerase subunit alpha, found in Bradyrhizobium diazoefficiens (strain JCM 10833 / BCRC 13528 / IAM 13628 / NBRC 14792 / USDA 110).